A 294-amino-acid chain; its full sequence is N-acetylmuramic acid 6-phosphate etherase (294 aa).

The SIS domain occupies 56-219 (TSQALKKGGR…STLSMVSVGK (164 aa)). Catalysis depends on Glu-84, which acts as the Proton donor. Glu-115 is a catalytic residue.

This sequence belongs to the GCKR-like family. MurNAc-6-P etherase subfamily. As to quaternary structure, homodimer.

It catalyses the reaction N-acetyl-D-muramate 6-phosphate + H2O = N-acetyl-D-glucosamine 6-phosphate + (R)-lactate. The protein operates within amino-sugar metabolism; 1,6-anhydro-N-acetylmuramate degradation. It participates in amino-sugar metabolism; N-acetylmuramate degradation. Its pathway is cell wall biogenesis; peptidoglycan recycling. Its function is as follows. Specifically catalyzes the cleavage of the D-lactyl ether substituent of MurNAc 6-phosphate, producing GlcNAc 6-phosphate and D-lactate. Together with AnmK, is also required for the utilization of anhydro-N-acetylmuramic acid (anhMurNAc) either imported from the medium or derived from its own cell wall murein, and thus plays a role in cell wall recycling. The chain is N-acetylmuramic acid 6-phosphate etherase from Francisella philomiragia subsp. philomiragia (strain ATCC 25017 / CCUG 19701 / FSC 153 / O#319-036).